Here is a 610-residue protein sequence, read N- to C-terminus: L-galactono-1,4-lactone dehydrogenase, mitochondrial (610 aa).

The N-terminal 35 residues, 1–35, are a transit peptide targeting the mitochondrion; it reads MLRSLLLRRSVGHSLGTLSPSSSTIRSSFSPHRTL. The tract at residues 17 to 61 is disordered; it reads TLSPSSSTIRSSFSPHRTLCTTGQTLTPPPPPPPRPPPPPPATAS. Residues 19–30 show a composition bias toward low complexity; the sequence is SPSSSTIRSSFS. The propeptide at 36–101 is removed in mature form; it reads CTTGQTLTPP…AKHKKAQIFR (66 aa). The span at 43 to 58 shows a compositional bias: pro residues; sequence TPPPPPPPRPPPPPPA. Residues 68–84 form a helical membrane-spanning segment; that stretch reads YAGYAALAIFSGVATYF. The FAD-binding PCMH-type domain maps to 123-258; sequence TRNFNQPENL…TPAKGTIELS (136 aa).

Requires FAD as cofactor.

It localises to the mitochondrion membrane. The catalysed reaction is L-galactono-1,4-lactone + 4 Fe(III)-[cytochrome c] = L-dehydroascorbate + 4 Fe(II)-[cytochrome c] + 5 H(+). It catalyses the reaction L-gulono-1,4-lactone + 2 Fe(III)-[cytochrome c] = L-ascorbate + 2 Fe(II)-[cytochrome c] + 3 H(+). Its pathway is cofactor biosynthesis; L-ascorbate biosynthesis. In terms of biological role, involved in the biosynthesis of ascorbate. Catalyzes the final step of ascorbate biosynthesis. Uses L-galactono-1,4-lactone and L-gulono-1,4-lactone as substrates, but not D-galactono-1,4-lactone, D-gulono-1,4-lactone, L-mannono-1,4-lactone or D-galactonic acid. Also active with phenazine methosulfate and 1,4-benzoquinone as electron acceptors. Involved in the regulation of the accumulation of the mitochondrial respiratory complex I. Structural part of one of the plant-specific mitochondrial complex I assembly intermediates, lacking the whole distal (PD) module. Prevents the binding of the plant specific P1 protein (CPN60/HSP60), responsible for the linkage of the proximal (PP) to the distal (PD) module. The chain is L-galactono-1,4-lactone dehydrogenase, mitochondrial from Arabidopsis thaliana (Mouse-ear cress).